The primary structure comprises 357 residues: Norreticuline-7-O-methyltransferase (357 aa).

Asp225 is a binding site for S-adenosyl-L-methionine. Catalysis depends on His263, which acts as the Proton acceptor.

The protein belongs to the class I-like SAM-binding methyltransferase superfamily. Cation-independent O-methyltransferase family. In terms of tissue distribution, expressed instems, leaves, roots and seedlings.

In terms of biological role, involved in the biosynthesis of benzylisoquinoline alkaloids. Catalyzes specifically the methylation of norreticuline at position seven to produce norlaudanine. No activity with norcoclaurine, reticuline, norlaudanosoline, norisoorientaline, scoulerine, salutaridinol, oripavine, salsolinol, codeine or morphine. Involved in papaverine biosynthesis. In Papaver somniferum (Opium poppy), this protein is Norreticuline-7-O-methyltransferase.